Consider the following 284-residue polypeptide: 4-hydroxybenzoate octaprenyltransferase (284 aa).

Helical transmembrane passes span 19 to 39, 42 to 62, 93 to 113, 114 to 134, 136 to 156, 161 to 181, 209 to 229, 235 to 252, and 264 to 284; these read IGTLLLLWPTLWSLIIAAKGM, FDVLVVFILGVVLMRSAGCVI, IVLFLVLAVVSFLLVLTMNPL, TIKLSFIGVGLAFIYPFMKRF, HLPQLFLGLAFSWAIPMAWAA, LPSIVWFIFVINALWTIAYDT, LMVGALQLVTLAMLIALGMHY, FYWALLVSGSLFVYQQHL, and AFLNNNYVGMAVTVGLFITFW.

This sequence belongs to the UbiA prenyltransferase family. The cofactor is Mg(2+).

It localises to the cell inner membrane. It carries out the reaction all-trans-octaprenyl diphosphate + 4-hydroxybenzoate = 4-hydroxy-3-(all-trans-octaprenyl)benzoate + diphosphate. Its pathway is cofactor biosynthesis; ubiquinone biosynthesis. In terms of biological role, catalyzes the prenylation of para-hydroxybenzoate (PHB) with an all-trans polyprenyl group. Mediates the second step in the final reaction sequence of ubiquinone-8 (UQ-8) biosynthesis, which is the condensation of the polyisoprenoid side chain with PHB, generating the first membrane-bound Q intermediate 3-octaprenyl-4-hydroxybenzoate. This Vibrio atlanticus (strain LGP32) (Vibrio splendidus (strain Mel32)) protein is 4-hydroxybenzoate octaprenyltransferase.